Consider the following 410-residue polypeptide: Phospho-N-acetylmuramoyl-pentapeptide-transferase (410 aa).

Helical transmembrane passes span R27–I47, T77–M97, L99–G119, L140–N160, P213–I233, G248–S268, I288–Y308, V312–L332, F337–V357, and V389–F409.

Belongs to the glycosyltransferase 4 family. MraY subfamily. Requires Mg(2+) as cofactor.

It localises to the cell inner membrane. It carries out the reaction UDP-N-acetyl-alpha-D-muramoyl-L-alanyl-gamma-D-glutamyl-meso-2,6-diaminopimeloyl-D-alanyl-D-alanine + di-trans,octa-cis-undecaprenyl phosphate = di-trans,octa-cis-undecaprenyl diphospho-N-acetyl-alpha-D-muramoyl-L-alanyl-D-glutamyl-meso-2,6-diaminopimeloyl-D-alanyl-D-alanine + UMP. It participates in cell wall biogenesis; peptidoglycan biosynthesis. Catalyzes the initial step of the lipid cycle reactions in the biosynthesis of the cell wall peptidoglycan: transfers peptidoglycan precursor phospho-MurNAc-pentapeptide from UDP-MurNAc-pentapeptide onto the lipid carrier undecaprenyl phosphate, yielding undecaprenyl-pyrophosphoryl-MurNAc-pentapeptide, known as lipid I. This chain is Phospho-N-acetylmuramoyl-pentapeptide-transferase, found in Protochlamydia amoebophila (strain UWE25).